A 105-amino-acid chain; its full sequence is Platelet factor 4 (105 aa).

An N-terminal signal peptide occupies residues 1 to 29 (MSAAAVFRGLRPSPELLLLGLLLLPAVVA). O-linked (GalNAc...) threonine; partial glycosylation is present at T31. 2 cysteine pairs are disulfide-bonded: C44–C71 and C46–C87. S61 carries the phosphoserine modification. Position 96 to 102 (96 to 102 (KKIIKKL)) interacts with heparin.

This sequence belongs to the intercrine alpha (chemokine CxC) family. In terms of assembly, homotetramer. Interacts with TNFAIP6 (via Link domain). Interacts with CCR1. Interacts with CXCR3. Interacts with THBD; this interaction enhances generation of activated protein C. O-linked glycan consists of Gal-GalNAc disaccharide which is modified with sialic acid residues (microheterogeneity).

It is found in the secreted. Functionally, chemokine released during platelet aggregation that plays a role in different biological processes including hematopoiesis, cell proliferation, differentiation, and activation. Acts via different functional receptors including CCR1, CXCR3A or CXCR3B. Upon interaction with CXCR3A receptor, induces activated T-lymphocytes migration mediated via downstream Ras/extracellular signal-regulated kinase (ERK) signaling. Neutralizes the anticoagulant effect of heparin by binding more strongly to heparin than to the chondroitin-4-sulfate chains of the carrier molecule. Plays a role in the inhibition of hematopoiesis and in the maintenance of hematopoietic stem cell (HSC) quiescence. Chemotactic for neutrophils and monocytes via CCR1. Inhibits endothelial cell proliferation. In cooperation with toll-like receptor 8/TLR8, induces chromatin remodeling and activates inflammatory gene expression via the TBK1-IRF5 axis. In addition, induces myofibroblast differentiation and collagen synthesis in different precursor cells, including endothelial cells, by stimulating endothelial-to-mesenchymal transition. Interacts with thrombomodulin/THBD to enhance the activation of protein C and thus potentiates its anticoagulant activity. The sequence is that of Platelet factor 4 (Pf4) from Rattus norvegicus (Rat).